The primary structure comprises 63 residues: Venom peptide 2b (63 aa).

The signal sequence occupies residues 1–22; the sequence is MRGTSFILFAVVVILGFLHGNA. AXPX repeat units lie at residues 22–25, 26–29, 32–35, 38–41, and 44–47; these read AEPL, ANPE, and ANPD. Positions 23-48 are excised as a propeptide; that stretch reads EPLANPEPSANPDPLANPDPLANPEA. Leu-62 carries the post-translational modification Leucine amide.

It belongs to the MCD family. Mastoparan subfamily. Expressed by the venom gland.

The protein localises to the secreted. It is found in the target cell membrane. In terms of biological role, antimicrobial peptide with strong and moderate activity against the fungi B.cinerea (MIC=5 uM) and C.albicans (MIC=100 uM), the Gram-negative bacterium E.coli (MIC=200 uM) and the Gram-positive bacterium S.aureus (MIC=25 uM). Shows cytolytic activity against insect cell lines. Has potent hemolytic activity against human erythrocytes (EC(50)=64 uM). In vivo, peptide injection in the vicinity of the head and thorax of lepidopteran larvae induces feeding disorder followed by death due to starvation. The chain is Venom peptide 2b from Eumenes pomiformis (Potter wasp).